A 1067-amino-acid chain; its full sequence is Carbamoyl phosphate synthase large chain (1067 aa).

Positions 1–401 are carboxyphosphate synthetic domain; that stretch reads MPLNKDIKKV…AFLKGIRSLE (401 aa). Residues R129, R169, G175, G176, K208, V210, E215, G241, I242, H243, Q284, and E298 each coordinate ATP. The ATP-grasp 1 domain maps to 133–327; that stretch reads RDMMNRINQP…IAKVAAKIAL (195 aa). Mg(2+)-binding residues include Q284, E298, and N300. Positions 284, 298, and 300 each coordinate Mn(2+). The interval 402–549 is oligomerization domain; that stretch reads IGKYSLEHKK…YSTYEQYDEV (148 aa). The segment at 550-932 is carbamoyl phosphate synthetic domain; that stretch reads VVSDNKKVVV…ALYKGFVGAS (383 aa). One can recognise an ATP-grasp 2 domain in the interval 674-864; that stretch reads DDLLERLNIA…IVDIATRIML (191 aa). Residues R710, K749, L751, E755, G780, V781, H782, S783, Q823, and E835 each coordinate ATP. The Mg(2+) site is built by Q823, E835, and N837. Q823, E835, and N837 together coordinate Mn(2+). In terms of domain architecture, MGS-like spans 933–1067; that stretch reads MYTGDKGKTI…NRELEVFNLI (135 aa). An allosteric domain region spans residues 933 to 1067; the sequence is MYTGDKGKTI…NRELEVFNLI (135 aa).

This sequence belongs to the CarB family. As to quaternary structure, composed of two chains; the small (or glutamine) chain promotes the hydrolysis of glutamine to ammonia, which is used by the large (or ammonia) chain to synthesize carbamoyl phosphate. Tetramer of heterodimers (alpha,beta)4. It depends on Mg(2+) as a cofactor. The cofactor is Mn(2+).

It carries out the reaction hydrogencarbonate + L-glutamine + 2 ATP + H2O = carbamoyl phosphate + L-glutamate + 2 ADP + phosphate + 2 H(+). It catalyses the reaction hydrogencarbonate + NH4(+) + 2 ATP = carbamoyl phosphate + 2 ADP + phosphate + 2 H(+). Its pathway is amino-acid biosynthesis; L-arginine biosynthesis; carbamoyl phosphate from bicarbonate: step 1/1. It functions in the pathway pyrimidine metabolism; UMP biosynthesis via de novo pathway; (S)-dihydroorotate from bicarbonate: step 1/3. Functionally, large subunit of the glutamine-dependent carbamoyl phosphate synthetase (CPSase). CPSase catalyzes the formation of carbamoyl phosphate from the ammonia moiety of glutamine, carbonate, and phosphate donated by ATP, constituting the first step of 2 biosynthetic pathways, one leading to arginine and/or urea and the other to pyrimidine nucleotides. The large subunit (synthetase) binds the substrates ammonia (free or transferred from glutamine from the small subunit), hydrogencarbonate and ATP and carries out an ATP-coupled ligase reaction, activating hydrogencarbonate by forming carboxy phosphate which reacts with ammonia to form carbamoyl phosphate. The protein is Carbamoyl phosphate synthase large chain of Clostridium perfringens (strain 13 / Type A).